Consider the following 350-residue polypeptide: Probable galactose-1-phosphate uridylyltransferase (350 aa).

Residues 31–52 are disordered; sequence PWSGQQEKAQKNELPEFDPTNP. Cys54 contacts Zn(2+). UDP-alpha-D-glucose-binding positions include 76–77 and Asn152; that span reads ND. His163 serves as a coordination point for Zn(2+). The Tele-UMP-histidine intermediate role is filled by His165. UDP-alpha-D-glucose is bound by residues Gln167, 314 to 317, and 319 to 320; these read KFMV and FE.

It belongs to the galactose-1-phosphate uridylyltransferase type 1 family. As to quaternary structure, homodimer. Zn(2+) is required as a cofactor.

The catalysed reaction is alpha-D-galactose 1-phosphate + UDP-alpha-D-glucose = alpha-D-glucose 1-phosphate + UDP-alpha-D-galactose. Its pathway is carbohydrate metabolism; galactose metabolism. The protein is Probable galactose-1-phosphate uridylyltransferase (Galt) of Drosophila melanogaster (Fruit fly).